A 388-amino-acid polypeptide reads, in one-letter code: Acetate kinase (388 aa).

Residue N14 coordinates Mg(2+). Residue K21 participates in ATP binding. R80 serves as a coordination point for substrate. The Proton donor/acceptor role is filled by D137. Residues 197 to 201 (HLGNG), 271 to 273 (DFR), and 319 to 323 (GIGEH) each bind ATP. Position 373 (E373) interacts with Mg(2+).

The protein belongs to the acetokinase family. In terms of assembly, homodimer. Mg(2+) is required as a cofactor. Requires Mn(2+) as cofactor.

It is found in the cytoplasm. The enzyme catalyses acetate + ATP = acetyl phosphate + ADP. It participates in metabolic intermediate biosynthesis; acetyl-CoA biosynthesis; acetyl-CoA from acetate: step 1/2. In terms of biological role, catalyzes the formation of acetyl phosphate from acetate and ATP. Can also catalyze the reverse reaction. In Mycobacterium marinum (strain ATCC BAA-535 / M), this protein is Acetate kinase.